We begin with the raw amino-acid sequence, 384 residues long: Zinc transporter 7 (384 aa).

An N-terminal signal peptide occupies residues methionine 1–alanine 25. Over glutamate 26–lysine 46 the chain is Extracellular. The helical transmembrane segment at glycine 47–glycine 67 threads the bilayer. At arginine 68 to alanine 79 the chain is on the cytoplasmic side. A helical transmembrane segment spans residues phenylalanine 80–leucine 100. Over histidine 101 to serine 119 the chain is Extracellular. The helical transmembrane segment at phenylalanine 120 to leucine 140 threads the bilayer. Residues alanine 141–arginine 227 lie on the Cytoplasmic side of the membrane. Residues aspartate 185 to valine 222 form a disordered region. Residues serine 195–glycine 205 are compositionally biased toward basic residues. A helical membrane pass occupies residues serine 228–leucine 248. Residues serine 249–proline 261 lie on the Extracellular side of the membrane. A helical transmembrane segment spans residues leucine 262–alanine 282. Residues glutamine 283–alanine 291 lie on the Cytoplasmic side of the membrane. A helical transmembrane segment spans residues alanine 292–valine 312. Residues alanine 313 to alanine 323 lie on the Extracellular side of the membrane. The helical transmembrane segment at leucine 324–valine 344 threads the bilayer. Residues aspartate 345–glutamine 363 lie on the Cytoplasmic side of the membrane. The helical transmembrane segment at valine 364–alanine 384 threads the bilayer.

The protein belongs to the ZIP transporter (TC 2.A.5) family.

It localises to the cell membrane. In terms of biological role, zinc transporter that may be involved in zinc uptake from the rhizosphere. This chain is Zinc transporter 7 (ZIP7), found in Oryza sativa subsp. japonica (Rice).